Reading from the N-terminus, the 433-residue chain is F-box/kelch-repeat protein At1g24800 (433 aa).

The 49-residue stretch at 23 to 71 (TSMCDLPPKLVGEKILTRIPITSLRAVRSTCKLWNALTKDRVLGKAAAQ) folds into the F-box domain. 2 Kelch repeats span residues 170-216 (HKIL…LYGV) and 286-337 (VLYH…RFDN).

The polypeptide is F-box/kelch-repeat protein At1g24800 (Arabidopsis thaliana (Mouse-ear cress)).